The primary structure comprises 208 residues: Uracil phosphoribosyltransferase (208 aa).

5-phospho-alpha-D-ribose 1-diphosphate-binding positions include R78, R103, and 130-138 (DPMLATGGS). Residues I193 and 198 to 200 (GDA) contribute to the uracil site. D199 contacts 5-phospho-alpha-D-ribose 1-diphosphate.

This sequence belongs to the UPRTase family. Mg(2+) serves as cofactor.

The catalysed reaction is UMP + diphosphate = 5-phospho-alpha-D-ribose 1-diphosphate + uracil. The protein operates within pyrimidine metabolism; UMP biosynthesis via salvage pathway; UMP from uracil: step 1/1. Its activity is regulated as follows. Allosterically activated by GTP. Its function is as follows. Catalyzes the conversion of uracil and 5-phospho-alpha-D-ribose 1-diphosphate (PRPP) to UMP and diphosphate. The protein is Uracil phosphoribosyltransferase of Aliivibrio salmonicida (strain LFI1238) (Vibrio salmonicida (strain LFI1238)).